A 29-amino-acid polypeptide reads, in one-letter code: Neurotoxin BmK A3-6 (29 aa).

Post-translationally, contains 3 disulfide bonds. Expressed by the venom gland.

The protein localises to the secreted. This chain is Neurotoxin BmK A3-6, found in Olivierus martensii (Manchurian scorpion).